A 705-amino-acid chain; its full sequence is Elongation factor G (705 aa).

Residues 7 to 287 (HLTRNIGIMA…YVCAFLPSPL (281 aa)) form the tr-type G domain. GTP is bound by residues 16-23 (AHIDAGKT), 84-88 (DTPGH), and 138-141 (NKMD).

Belongs to the TRAFAC class translation factor GTPase superfamily. Classic translation factor GTPase family. EF-G/EF-2 subfamily.

It localises to the cytoplasm. In terms of biological role, catalyzes the GTP-dependent ribosomal translocation step during translation elongation. During this step, the ribosome changes from the pre-translocational (PRE) to the post-translocational (POST) state as the newly formed A-site-bound peptidyl-tRNA and P-site-bound deacylated tRNA move to the P and E sites, respectively. Catalyzes the coordinated movement of the two tRNA molecules, the mRNA and conformational changes in the ribosome. The chain is Elongation factor G from Bacteroides thetaiotaomicron (strain ATCC 29148 / DSM 2079 / JCM 5827 / CCUG 10774 / NCTC 10582 / VPI-5482 / E50).